Reading from the N-terminus, the 598-residue chain is Aspartate--tRNA ligase (598 aa).

L-aspartate is bound at residue Glu182. The interval 206-209 is aspartate; that stretch reads QLFK. Arg228 contacts L-aspartate. ATP-binding positions include 228-230 and Gln237; that span reads RDE. L-aspartate is bound at residue His456. Glu490 serves as a coordination point for ATP. Arg497 contacts L-aspartate. ATP is bound at residue 542–545; the sequence is GVDR.

This sequence belongs to the class-II aminoacyl-tRNA synthetase family. Type 1 subfamily. As to quaternary structure, homodimer.

The protein localises to the cytoplasm. The catalysed reaction is tRNA(Asp) + L-aspartate + ATP = L-aspartyl-tRNA(Asp) + AMP + diphosphate. Catalyzes the attachment of L-aspartate to tRNA(Asp) in a two-step reaction: L-aspartate is first activated by ATP to form Asp-AMP and then transferred to the acceptor end of tRNA(Asp). This Agathobacter rectalis (strain ATCC 33656 / DSM 3377 / JCM 17463 / KCTC 5835 / VPI 0990) (Eubacterium rectale) protein is Aspartate--tRNA ligase.